We begin with the raw amino-acid sequence, 999 residues long: P3N-PIPO polyprotein (999 aa).

Residues 176-317 (LKKAVGSGKV…LDNVYTIEHY (142 aa)) form the Peptidase S30 domain. Active-site for P1 proteinase activity residues include H230, E239, and S271. An Involved in interaction with stylet and aphid transmission motif is present at residues 370-373 (KLSC). An Involved in virions binding and aphid transmission motif is present at residues 626-628 (PTK). Positions 652–774 (MYIAKEGYCY…EGEMKHYRVG (123 aa)) constitute a Peptidase C6 domain. Catalysis depends on for helper component proteinase activity residues C660 and H733.

This sequence belongs to the potyviridae P3N-PIPO polyprotein family. In terms of assembly, interacts (via PIPO domain) with host PCaP1 protein; this interaction may help to anchor the movement complex to the plasma membrane from which the complex could move to the plasmodesmata. Post-translationally, potyviral RNA is expressed as two polyproteins which undergo post-translational proteolytic processing. Genome polyprotein is processed by NIa-pro, P1 and HC-pro proteinases resulting in the production of at least ten individual proteins. P3N-PIPO is cleaved by P1 and HC-pro proteinases resulting in the production of three individual proteins. The P1 proteinase and the HC-pro cleave only their respective C-termini autocatalytically.

The protein resides in the host cell junction. The protein localises to the host plasmodesma. It carries out the reaction Hydrolyzes a Gly-|-Gly bond at its own C-terminus, commonly in the sequence -Tyr-Xaa-Val-Gly-|-Gly, in the processing of the potyviral polyprotein.. Its function is as follows. Required for aphid transmission and also has proteolytic activity. Only cleaves a Gly-Gly dipeptide at its own C-terminus. Interacts with virions and aphid stylets. Acts as a suppressor of RNA-mediated gene silencing, also known as post-transcriptional gene silencing (PTGS), a mechanism of plant viral defense that limits the accumulation of viral RNAs. May have RNA-binding activity. In terms of biological role, allows efficient cell to cell propagation, by bypassing the host cell wall barrier. Transports viral genome to neighboring plant cells directly through plasmosdesmata, without any budding. This Phaseolus vulgaris (Kidney bean) protein is P3N-PIPO polyprotein.